A 525-amino-acid polypeptide reads, in one-letter code: Peptide chain release factor 3 (525 aa).

The tr-type G domain occupies 11–279; it reads NNRRTFAIIS…AYLKYAPKPA (269 aa). GTP contacts are provided by residues 20 to 27, 88 to 92, and 142 to 145; these read SHPDAGKT, DTPGH, and NKLD.

The protein belongs to the TRAFAC class translation factor GTPase superfamily. Classic translation factor GTPase family. PrfC subfamily.

Its subcellular location is the cytoplasm. Increases the formation of ribosomal termination complexes and stimulates activities of RF-1 and RF-2. It binds guanine nucleotides and has strong preference for UGA stop codons. It may interact directly with the ribosome. The stimulation of RF-1 and RF-2 is significantly reduced by GTP and GDP, but not by GMP. In Ligilactobacillus salivarius (strain UCC118) (Lactobacillus salivarius), this protein is Peptide chain release factor 3.